The chain runs to 378 residues: Pseudouridine kinase (378 aa).

Pseudouridine contacts are provided by residues Asp-12, Thr-26, Gly-37 to Asn-41, Val-38, Asn-137, and Lys-166. Mg(2+) is bound by residues Ser-181 and Thr-237. Residues Thr-237, Gly-239, Gly-242, Thr-298, Leu-306, and Gly-310 each coordinate ATP. Asp-311 lines the pseudouridine pocket.

The protein belongs to the carbohydrate kinase PfkB family. In terms of assembly, forms homodimers.

The protein resides in the peroxisome. The catalysed reaction is pseudouridine + ATP = psi-UMP + ADP + H(+). Catalyzes the phosphorylation of pseudouridine to pseudouridine 5'-phosphate (PsiMP). Catalyzes the first step in a pseudouridine degradation pathway. Acts together with the pseudouridine 5'-phosphate glycosidase PUMY in the peroxisome to prevent toxic pseudouridine monophosphate accumulation. This is Pseudouridine kinase from Arabidopsis thaliana (Mouse-ear cress).